Here is a 444-residue protein sequence, read N- to C-terminus: Gustatory receptor 5a for trehalose (444 aa).

Residues 1–56 (MRQLKGRNRCNRAVRHLKIQGKMWLKNLKSGLEQIRESQVRGTRKNFLHDGSFHEA) are Cytoplasmic-facing. A helical transmembrane segment spans residues 57–77 (VAPVLAVAQCFCLMPVCGISA). At 78–178 (PTYRGLSFNR…RARPARRLKL (101 aa)) the chain is on the extracellular side. A helical membrane pass occupies residues 179–199 (VAFVLLVVSLMEHLLSIISVV). The Cytoplasmic portion of the chain corresponds to 200-214 (YYDFCPRRSDPVESY). A helical membrane pass occupies residues 215 to 235 (LLGASAQLFEVFPYSNWLAWL). At 236–240 (GKIQN) the chain is on the extracellular side. The helical transmembrane segment at 241–261 (VLLTFGWSYMDIFLMMLGMGL) threads the bilayer. Topologically, residues 262 to 305 (SEMLARLNRSLEQQVRQPMPEAYWTWSRTLYRSIVELIREVDDA) are cytoplasmic. Residues 306-326 (VSGIMLISFGSNLYFICLQLL) form a helical membrane-spanning segment. At 327–338 (KSINTMPSSAHA) the chain is on the extracellular side. A helical membrane pass occupies residues 339-359 (VYFYFSLLFLLSRSTAVLLFV). The Cytoplasmic segment spans residues 360–410 (SAINDQAREPLRLLRLVPLKGYHPEVFRFAAELASDQVALTGLKFFNVTRK). The helical transmembrane segment at 411–431 (LFLAMAGTVATYELVLIQFHE) threads the bilayer. At 432 to 444 (DKKTWDCSPFNLD) the chain is on the extracellular side.

This sequence belongs to the insect chemoreceptor superfamily. Gustatory receptor (GR) family. Gr5a subfamily. Expressed in labellar chemosensory neurons.

It is found in the cell membrane. Its function is as follows. Gustatory receptor required for response to the sugar trehalose in taste neurons. Gr5a neurons selectively respond to sugars, in contrast to Gr66a cells which respond to bitter compounds. Flies are attracted to sugars and avoid bitter substances, suggesting that Gr5a neuron activity is sufficient to mediate acceptance behavior. Sugar signal transduction occurs through coupling with G-proteins such as Galpha49B and G-salpha60A. The protein is Gustatory receptor 5a for trehalose (Gr5a) of Drosophila melanogaster (Fruit fly).